The primary structure comprises 1013 residues: MTNFKFSLLACSIAFALNASTAYAAQPTNQPTNQPTNQPTNQPTNQPTNQPTNQPTNQDSNLSEQLEQINVSGSTENSDSKTPPKIAETVKTAKTLEREQANNIKDIVKYETGVTVVEAGRFGQSGFAIRGVDENRVAINIDGLRQAETLSSQGFKELFEGYGNFNNTRNGAEIETLKEVNITKGANSIKSGSGSLGGSVIYKTKDARDYLLNKDYYVSYKKGYATENNQSFNTLTLAGRYKKFDVLVVTTSRNGHELENYGYKNYNDKIQGKRREKADPYKIEQDSTLLKLSFNPTENHRFTLAADLYEHRSRGQDLSYTLKYLKTLPDLPEVDSRHTNDKTKRHNISFSYENFSQTPFWDTLKITFSKQKIKTRARTDEYCDAGVRYCEGTANPAGLKLKNGEITRRDGTPLQFKEINNTTTPNSNSNKDKTYDFSKLIDTNGKEIESGITRSNDTFWYDCSIFDCENPGKMKVAEGKTYYRYDGTWKNNVQLEKKVLNGKEFARINNGTRGKTFPILPSSLGYLERLWQERDLDTNTQQLNLDLTKDFKTWRVEHNLQYGSSYNTTMKRMVNRAGYDATDVQWWAKRTLGTRFDFLKNEEIVETCATTFGWNAFLCPRVDPEFSYLLPIKTKEKSVYLFDNVVITDYLSFDLGYRYDNIHYQPKYKHGVTPKLPDDIVKELFIPLKSGQNNNDAEVKKNVQENIDYIAKQNKKYKAHSYSFVSTIDPTSFLRLQLKYSKGFRAPTSDEMYFTFKHPDFTILPNTHLKPEIAKTKEIAFTLHHDDWGFISTSLFKTNYRDFIDLVYKGEREFEVGNPNNRGKISFDTFQNINRDSAVVKGIEINSKVFLGKMAKFMDGFNLSYKYTYQKGRMDGNIPMNAIQPKTMVYGLGYDHPSQKFGFNFYTTHVASKNPEDTYDIYAKDKNQTNTSIKWRSKSYTILDLIGYVQPIKNLTIRAGVYNLTNRKYITWDSARSIRSFGTSNVIDQKTGQGINRFYAPGRNYKMSVQFEF.

An N-terminal signal peptide occupies residues 1–24; sequence MTNFKFSLLACSIAFALNASTAYA. Tandem repeats lie at residues 26–29, 30–33, 34–37, 38–41, 42–45, 46–49, 50–53, and 54–57. The segment at 26–57 is 8 X 4 AA tandem repeats of Q-P-T-N; that stretch reads QPTNQPTNQPTNQPTNQPTNQPTNQPTNQPTN. A compositionally biased stretch (low complexity) spans 26–58; sequence QPTNQPTNQPTNQPTNQPTNQPTNQPTNQPTNQ. Positions 26–61 are disordered; the sequence is QPTNQPTNQPTNQPTNQPTNQPTNQPTNQPTNQDSN. A TonB box motif is present at residues 67-74; that stretch reads EQINVSGS. Residues 78-205 enclose the TBDR plug domain; that stretch reads SDSKTPPKIA…LGGSVIYKTK (128 aa). Positions 213–1013 constitute a TBDR beta-barrel domain; sequence NKDYYVSYKK…NYKMSVQFEF (801 aa). A TonB C-terminal box motif is present at residues 996 to 1013; it reads NRFYAPGRNYKMSVQFEF.

It belongs to the TonB-dependent receptor family. Hemoglobin/haptoglobin binding protein subfamily.

It localises to the cell outer membrane. Acts as a receptor for hemoglobin of the human host and is required for heme uptake. The protein is Hemoglobin-binding protein A (hgbA) of Haemophilus influenzae.